A 382-amino-acid polypeptide reads, in one-letter code: D-galactonate dehydratase (382 aa).

Mg(2+) is bound at residue D183. H185 (proton donor) is an active-site residue. Mg(2+)-binding residues include E209 and E235. H285 functions as the Proton acceptor in the catalytic mechanism.

It belongs to the mandelate racemase/muconate lactonizing enzyme family. GalD subfamily. Requires Mg(2+) as cofactor.

It carries out the reaction D-galactonate = 2-dehydro-3-deoxy-D-galactonate + H2O. The protein operates within carbohydrate acid metabolism; D-galactonate degradation; D-glyceraldehyde 3-phosphate and pyruvate from D-galactonate: step 1/3. Its function is as follows. Catalyzes the dehydration of D-galactonate to 2-keto-3-deoxy-D-galactonate. This chain is D-galactonate dehydratase, found in Escherichia coli O45:K1 (strain S88 / ExPEC).